The sequence spans 149 residues: Nucleoside diphosphate kinase (149 aa).

ATP is bound by residues Lys-9, Phe-57, Arg-85, Thr-91, Arg-102, and Asn-112. His-115 (pros-phosphohistidine intermediate) is an active-site residue.

This sequence belongs to the NDK family. Homotetramer. Requires Mg(2+) as cofactor.

The protein localises to the cytoplasm. The enzyme catalyses a 2'-deoxyribonucleoside 5'-diphosphate + ATP = a 2'-deoxyribonucleoside 5'-triphosphate + ADP. The catalysed reaction is a ribonucleoside 5'-diphosphate + ATP = a ribonucleoside 5'-triphosphate + ADP. Major role in the synthesis of nucleoside triphosphates other than ATP. The ATP gamma phosphate is transferred to the NDP beta phosphate via a ping-pong mechanism, using a phosphorylated active-site intermediate. The chain is Nucleoside diphosphate kinase from Heliobacterium modesticaldum (strain ATCC 51547 / Ice1).